A 950-amino-acid polypeptide reads, in one-letter code: 5'-3' exoribonuclease 2 (950 aa).

A CCHC-type zinc finger spans residues 262–278; that stretch reads PCGLCNQFGHEVKDCEG. K286 bears the N6-acetyllysine mark. Residues 408-508 form a disordered region; sequence KDDEDSFRRR…SDSEPEPEDN (101 aa). Basic residues predominate over residues 416 to 426; it reads RRQKEKRKRMK. T439 bears the Phosphothreonine mark. Polar residues predominate over residues 445 to 458; it reads SRNSPGSQVASNPR. Phosphoserine is present on residues S448, S471, S473, S475, S482, S487, S499, S501, and S678. A compositionally biased stretch (low complexity) spans 468 to 482; the sequence is NNSSPSISPNTSFTS. Residues R824, R847, and R851 each carry the asymmetric dimethylarginine; alternate modification. R824, R847, and R851 each carry omega-N-methylarginine; alternate. Position 880 is an asymmetric dimethylarginine (R880). Residue R883 is modified to Asymmetric dimethylarginine; alternate. R883 carries the omega-N-methylarginine; alternate modification. Position 895 is an omega-N-methylarginine (R895). The segment at 911–950 is disordered; it reads MLAGPGGYPPRRDDRGGRQGYPREGRKYPLPPPSGRYNWN. Basic and acidic residues predominate over residues 920–937; the sequence is PRRDDRGGRQGYPREGRK. An Asymmetric dimethylarginine; alternate modification is found at R946. R946 carries the omega-N-methylarginine; alternate modification.

The protein belongs to the 5'-3' exonuclease family. XRN2/RAT1 subfamily. As to quaternary structure, interacts with POLR2A and SMN1/SMN2. Interacts with CDKN2AIP and NKRF. Interacts with CDKN2AIPNL; the interaction is direct. Interacts with TRIM71 (via NHL repeats) in an RNA-dependent manner. Interacts with DHX34; the interaction is RNA-independent. In terms of tissue distribution, expressed in the spleen, thymus, prostate, testis, ovary, small intestine, colon, peripheral blood leukocytes, heart, brain, placenta, lung, liver, skeletal muscle, kidney, and pancreas. Isoform 2 is expressed predominantly in peripheral blood leukocytes.

The protein resides in the nucleus. It localises to the nucleolus. Its function is as follows. Possesses 5'-&gt;3' exoribonuclease activity. May promote the termination of transcription by RNA polymerase II. During transcription termination, cleavage at the polyadenylation site liberates a 5' fragment which is subsequently processed to form the mature mRNA and a 3' fragment which remains attached to the elongating polymerase. The processive degradation of this 3' fragment by this protein may promote termination of transcription. Binds to RNA polymerase II (RNAp II) transcription termination R-loops formed by G-rich pause sites. In Homo sapiens (Human), this protein is 5'-3' exoribonuclease 2 (XRN2).